The following is a 368-amino-acid chain: tRNA-specific 2-thiouridylase MnmA (368 aa).

ATP-binding positions include 11–18 (GMSGGVDS) and M37. Residues 97-99 (NPD) form an interaction with target base in tRNA region. C102 (nucleophile) is an active-site residue. A disulfide bridge connects residues C102 and C199. Position 127 (G127) interacts with ATP. The segment at 149 to 151 (KDQ) is interaction with tRNA. C199 serves as the catalytic Cysteine persulfide intermediate. The interaction with tRNA stretch occupies residues 311–312 (RY).

This sequence belongs to the MnmA/TRMU family. Interacts with TusE.

It is found in the cytoplasm. It catalyses the reaction S-sulfanyl-L-cysteinyl-[protein] + uridine(34) in tRNA + AH2 + ATP = 2-thiouridine(34) in tRNA + L-cysteinyl-[protein] + A + AMP + diphosphate + H(+). In terms of biological role, catalyzes the 2-thiolation of uridine at the wobble position (U34) of tRNA(Lys), tRNA(Glu) and tRNA(Gln), leading to the formation of s(2)U34, the first step of tRNA-mnm(5)s(2)U34 synthesis. Sulfur is provided by IscS, via a sulfur-relay system. Binds ATP and its substrate tRNAs. This chain is tRNA-specific 2-thiouridylase MnmA, found in Salmonella paratyphi B (strain ATCC BAA-1250 / SPB7).